The sequence spans 275 residues: Leucine-rich repeat-containing protein 3C (275 aa).

Positions 1–41 are cleaved as a signal peptide; sequence MRMTSSSFVSYCTPGLCQFMAMLPTAGHLLPLLLVIGTGGT. Positions 42–79 constitute an LRRNT domain; it reads VPSPQVPPRGCYVAKEAGERTFRCSQAGLSAVPSGIPN. 3 LRR repeats span residues 80 to 101, 104 to 125, and 129 to 150; these read DTRK…AFQH, VLEE…AFQG, and TLRH…AFVG. N-linked (GlcNAc...) asparagine glycosylation occurs at Asn156. The 53-residue stretch at 160 to 212 folds into the LRRCT domain; that stretch reads NPWHCDCALQEVLRQVRLVPGTGTGIVCGSGARPDLVGQEFLLLAGEEELCGS. The helical transmembrane segment at 225 to 245 threads the bilayer; the sequence is LLVTMGGWLTLMVAYLVHYVW.

Belongs to the LRRC3 family.

The protein resides in the membrane. This is Leucine-rich repeat-containing protein 3C (LRRC3C) from Homo sapiens (Human).